The primary structure comprises 148 residues: Protein GLUTAMINE DUMPER 3 (148 aa).

The segment at M1 to P24 is disordered. Residues M1–Y34 are Extracellular-facing. A helical transmembrane segment spans residues L35 to C55. The Cytoplasmic segment spans residues S56–H148. Positions V99 to G103 match the VIMAG motif. Residues C120 to G132 show a composition bias toward acidic residues. The tract at residues C120 to H148 is disordered. A compositionally biased stretch (polar residues) spans P138 to H148.

The protein belongs to the GLUTAMINE DUMPER 1 (TC 9.B.60) family. In terms of tissue distribution, expressed in the vascular tissues. Also detected in anthers.

The protein localises to the membrane. Functionally, probable subunit of an amino acid transporter involved in the regulation of the amino acid metabolism. Stimulates amino acid export by activating nonselective amino acid facilitators. Acts upstream genes involved in the salicylic acid (SA) pathway and in the geminivirus-host interaction. This Arabidopsis thaliana (Mouse-ear cress) protein is Protein GLUTAMINE DUMPER 3 (GDU3).